Reading from the N-terminus, the 284-residue chain is D-tagatose-1,6-bisphosphate aldolase subunit GatY (284 aa).

Asp-82 acts as the Proton donor in catalysis. Zn(2+)-binding residues include His-83 and His-180. A dihydroxyacetone phosphate-binding site is contributed by Gly-181. Zn(2+) is bound at residue His-208. Residues 209 to 211 (GAS) and 230 to 233 (NVAT) contribute to the dihydroxyacetone phosphate site.

Belongs to the class II fructose-bisphosphate aldolase family. TagBP aldolase GatY subfamily. As to quaternary structure, forms a complex with GatZ. The cofactor is Zn(2+).

It catalyses the reaction D-tagatofuranose 1,6-bisphosphate = D-glyceraldehyde 3-phosphate + dihydroxyacetone phosphate. Its pathway is carbohydrate metabolism; D-tagatose 6-phosphate degradation; D-glyceraldehyde 3-phosphate and glycerone phosphate from D-tagatose 6-phosphate: step 2/2. Its function is as follows. Catalytic subunit of the tagatose-1,6-bisphosphate aldolase GatYZ, which catalyzes the reversible aldol condensation of dihydroxyacetone phosphate (DHAP or glycerone-phosphate) with glyceraldehyde 3-phosphate (G3P) to produce tagatose 1,6-bisphosphate (TBP). Requires GatZ subunit for full activity and stability. Is involved in the catabolism of galactitol. The protein is D-tagatose-1,6-bisphosphate aldolase subunit GatY of Shigella dysenteriae serotype 1 (strain Sd197).